A 459-amino-acid polypeptide reads, in one-letter code: Cysteine--tRNA ligase (459 aa).

A Zn(2+)-binding site is contributed by Cys-27. The short motif at 29 to 39 (VTVYDDCHIGH) is the 'HIGH' region element. Zn(2+) contacts are provided by Cys-208, His-233, and Glu-237. The short motif at 265 to 269 (KMSKS) is the 'KMSKS' region element. Lys-268 lines the ATP pocket.

Belongs to the class-I aminoacyl-tRNA synthetase family. Monomer. The cofactor is Zn(2+).

The protein resides in the cytoplasm. It carries out the reaction tRNA(Cys) + L-cysteine + ATP = L-cysteinyl-tRNA(Cys) + AMP + diphosphate. The chain is Cysteine--tRNA ligase from Francisella tularensis subsp. novicida (strain U112).